Consider the following 86-residue polypeptide: Small ribosomal subunit protein bS20 (86 aa).

Basic and acidic residues predominate over residues 1–18 (MANIKSQEKRIRTNERAR). The tract at residues 1–25 (MANIKSQEKRIRTNERARLRNQATK) is disordered.

This sequence belongs to the bacterial ribosomal protein bS20 family.

In terms of biological role, binds directly to 16S ribosomal RNA. The sequence is that of Small ribosomal subunit protein bS20 from Mycobacteroides abscessus (strain ATCC 19977 / DSM 44196 / CCUG 20993 / CIP 104536 / JCM 13569 / NCTC 13031 / TMC 1543 / L948) (Mycobacterium abscessus).